A 361-amino-acid polypeptide reads, in one-letter code: tRNA(Ile)-lysidine synthase (361 aa).

Residue 32–37 (SGGPDS) participates in ATP binding.

It belongs to the tRNA(Ile)-lysidine synthase family.

The protein localises to the cytoplasm. It catalyses the reaction cytidine(34) in tRNA(Ile2) + L-lysine + ATP = lysidine(34) in tRNA(Ile2) + AMP + diphosphate + H(+). Functionally, ligates lysine onto the cytidine present at position 34 of the AUA codon-specific tRNA(Ile) that contains the anticodon CAU, in an ATP-dependent manner. Cytidine is converted to lysidine, thus changing the amino acid specificity of the tRNA from methionine to isoleucine. This chain is tRNA(Ile)-lysidine synthase, found in Bradyrhizobium diazoefficiens (strain JCM 10833 / BCRC 13528 / IAM 13628 / NBRC 14792 / USDA 110).